The following is a 921-amino-acid chain: Isoleucine--tRNA ligase (921 aa).

A 'HIGH' region motif is present at residues 57 to 67 (PYANGDIHMGH). Glu-552 contacts L-isoleucyl-5'-AMP. The 'KMSKS' region motif lies at 593–597 (KMSKS). Residue Lys-596 coordinates ATP. Zn(2+) contacts are provided by Cys-888, Cys-891, Cys-908, and Cys-911.

This sequence belongs to the class-I aminoacyl-tRNA synthetase family. IleS type 1 subfamily. In terms of assembly, monomer. Zn(2+) is required as a cofactor.

It is found in the cytoplasm. The catalysed reaction is tRNA(Ile) + L-isoleucine + ATP = L-isoleucyl-tRNA(Ile) + AMP + diphosphate. Its function is as follows. Catalyzes the attachment of isoleucine to tRNA(Ile). As IleRS can inadvertently accommodate and process structurally similar amino acids such as valine, to avoid such errors it has two additional distinct tRNA(Ile)-dependent editing activities. One activity is designated as 'pretransfer' editing and involves the hydrolysis of activated Val-AMP. The other activity is designated 'posttransfer' editing and involves deacylation of mischarged Val-tRNA(Ile). The polypeptide is Isoleucine--tRNA ligase (Bacillus cereus (strain 03BB102)).